The primary structure comprises 199 residues: Recombination protein RecR (199 aa).

The C4-type zinc-finger motif lies at Cys-57–Cys-72. A Toprim domain is found at Thr-80–Ser-176.

Belongs to the RecR family.

Functionally, may play a role in DNA repair. It seems to be involved in an RecBC-independent recombinational process of DNA repair. It may act with RecF and RecO. The polypeptide is Recombination protein RecR (Lactobacillus acidophilus (strain ATCC 700396 / NCK56 / N2 / NCFM)).